The following is a 272-amino-acid chain: ATP synthase subunit a (272 aa).

Transmembrane regions (helical) follow at residues 41-61 (VLNI…LVLF), 101-121 (VIAP…FMDL), 147-167 (DVNI…FYSI), 221-241 (LIFI…LSVP), and 243-263 (AIFH…LTIV).

The protein belongs to the ATPase A chain family. In terms of assembly, F-type ATPases have 2 components, CF(1) - the catalytic core - and CF(0) - the membrane proton channel. CF(1) has five subunits: alpha(3), beta(3), gamma(1), delta(1), epsilon(1). CF(0) has three main subunits: a(1), b(2) and c(9-12). The alpha and beta chains form an alternating ring which encloses part of the gamma chain. CF(1) is attached to CF(0) by a central stalk formed by the gamma and epsilon chains, while a peripheral stalk is formed by the delta and b chains.

The protein resides in the cell inner membrane. Key component of the proton channel; it plays a direct role in the translocation of protons across the membrane. In Erwinia tasmaniensis (strain DSM 17950 / CFBP 7177 / CIP 109463 / NCPPB 4357 / Et1/99), this protein is ATP synthase subunit a.